A 939-amino-acid polypeptide reads, in one-letter code: Probable importin ECU10_0620 (939 aa).

The 68-residue stretch at 23–90 folds into the Importin N-terminal domain; that stretch reads AEAMLMDLEK…VENILDLFLY (68 aa).

Belongs to the importin beta family.

The protein localises to the nucleus. It is found in the cytoplasm. Its function is as follows. Active in protein import into the nucleus. The sequence is that of Probable importin ECU10_0620 from Encephalitozoon cuniculi (strain GB-M1) (Microsporidian parasite).